Consider the following 103-residue polypeptide: Endoribonuclease MazF3 (103 aa).

Belongs to the PemK/MazF family. As to quaternary structure, forms a complex with cognate antitoxin MazE3.

Its function is as follows. Toxic component of a type II toxin-antitoxin (TA) system. Acts as an endoribonuclease, cleaving in U-rich regions. Neutralized by cognate antitoxin MazE3. The chain is Endoribonuclease MazF3 (mazF3) from Mycobacterium tuberculosis (strain CDC 1551 / Oshkosh).